Consider the following 496-residue polypeptide: Cobyric acid synthase (496 aa).

The GATase cobBQ-type domain occupies 252-442 (DLAVAVIRLP…LHGCFDSDTY (191 aa)). Cys-333 functions as the Nucleophile in the catalytic mechanism. His-434 is a catalytic residue.

The protein belongs to the CobB/CobQ family. CobQ subfamily.

It functions in the pathway cofactor biosynthesis; adenosylcobalamin biosynthesis. Catalyzes amidations at positions B, D, E, and G on adenosylcobyrinic A,C-diamide. NH(2) groups are provided by glutamine, and one molecule of ATP is hydrogenolyzed for each amidation. The polypeptide is Cobyric acid synthase (Desulforudis audaxviator (strain MP104C)).